The following is a 513-amino-acid chain: 2-isopropylmalate synthase (513 aa).

Positions 5-268 constitute a Pyruvate carboxyltransferase domain; that stretch reads LIIFDTTLRD…DIGVDTTQIV (264 aa). The Mn(2+) site is built by Asp-14, His-202, His-204, and Asn-239. The regulatory domain stretch occupies residues 394–513; that stretch reads RFISLSQRSE…KAVQKINPQI (120 aa).

Belongs to the alpha-IPM synthase/homocitrate synthase family. LeuA type 1 subfamily. Homodimer. Mn(2+) is required as a cofactor.

It is found in the cytoplasm. It catalyses the reaction 3-methyl-2-oxobutanoate + acetyl-CoA + H2O = (2S)-2-isopropylmalate + CoA + H(+). The protein operates within amino-acid biosynthesis; L-leucine biosynthesis; L-leucine from 3-methyl-2-oxobutanoate: step 1/4. In terms of biological role, catalyzes the condensation of the acetyl group of acetyl-CoA with 3-methyl-2-oxobutanoate (2-ketoisovalerate) to form 3-carboxy-3-hydroxy-4-methylpentanoate (2-isopropylmalate). This is 2-isopropylmalate synthase from Cupriavidus necator (strain ATCC 17699 / DSM 428 / KCTC 22496 / NCIMB 10442 / H16 / Stanier 337) (Ralstonia eutropha).